A 249-amino-acid chain; its full sequence is Methylthioribulose-1-phosphate dehydratase (249 aa).

The interval M1–E25 is disordered. A compositionally biased stretch (polar residues) spans T9–L18. Residue C105 participates in substrate binding. The Zn(2+) site is built by H122 and H124. The active-site Proton donor/acceptor is the E151. H207 lines the Zn(2+) pocket.

It belongs to the aldolase class II family. MtnB subfamily. Requires Zn(2+) as cofactor.

It localises to the cytoplasm. The enzyme catalyses 5-(methylsulfanyl)-D-ribulose 1-phosphate = 5-methylsulfanyl-2,3-dioxopentyl phosphate + H2O. The protein operates within amino-acid biosynthesis; L-methionine biosynthesis via salvage pathway; L-methionine from S-methyl-5-thio-alpha-D-ribose 1-phosphate: step 2/6. Catalyzes the dehydration of methylthioribulose-1-phosphate (MTRu-1-P) into 2,3-diketo-5-methylthiopentyl-1-phosphate (DK-MTP-1-P). This chain is Methylthioribulose-1-phosphate dehydratase, found in Arthroderma otae (strain ATCC MYA-4605 / CBS 113480) (Microsporum canis).